The primary structure comprises 180 residues: tRNA (cytidine(56)-2'-O)-methyltransferase (180 aa).

S-adenosyl-L-methionine-binding positions include Leu-84 and 112–116 (GAEKV).

The protein belongs to the aTrm56 family. Homodimer.

The protein resides in the cytoplasm. It catalyses the reaction cytidine(56) in tRNA + S-adenosyl-L-methionine = 2'-O-methylcytidine(56) in tRNA + S-adenosyl-L-homocysteine + H(+). Its function is as follows. Specifically catalyzes the AdoMet-dependent 2'-O-ribose methylation of cytidine at position 56 in tRNAs. The sequence is that of tRNA (cytidine(56)-2'-O)-methyltransferase from Natronomonas pharaonis (strain ATCC 35678 / DSM 2160 / CIP 103997 / JCM 8858 / NBRC 14720 / NCIMB 2260 / Gabara) (Halobacterium pharaonis).